The chain runs to 224 residues: Putative adhesin RF_1314 (224 aa).

The first 22 residues, 1–22 (MKKLLLIAATSATILSSSISFA), serve as a signal peptide directing secretion.

This is Putative adhesin RF_1314 from Rickettsia felis (strain ATCC VR-1525 / URRWXCal2) (Rickettsia azadi).